The sequence spans 252 residues: 5'-nucleotidase SurE (252 aa).

Residues Asp-8, Asp-9, Ser-39, and Asn-91 each contribute to the a divalent metal cation site.

Belongs to the SurE nucleotidase family. The cofactor is a divalent metal cation.

The protein resides in the cytoplasm. It carries out the reaction a ribonucleoside 5'-phosphate + H2O = a ribonucleoside + phosphate. Its function is as follows. Nucleotidase that shows phosphatase activity on nucleoside 5'-monophosphates. This is 5'-nucleotidase SurE from Legionella pneumophila (strain Corby).